Here is a 162-residue protein sequence, read N- to C-terminus: Endoribonuclease YbeY (162 aa).

Zn(2+) is bound by residues H128, H132, and H138.

Belongs to the endoribonuclease YbeY family. It depends on Zn(2+) as a cofactor.

It is found in the cytoplasm. In terms of biological role, single strand-specific metallo-endoribonuclease involved in late-stage 70S ribosome quality control and in maturation of the 3' terminus of the 16S rRNA. This chain is Endoribonuclease YbeY, found in Levilactobacillus brevis (strain ATCC 367 / BCRC 12310 / CIP 105137 / JCM 1170 / LMG 11437 / NCIMB 947 / NCTC 947) (Lactobacillus brevis).